Consider the following 133-residue polypeptide: Small ribosomal subunit protein uS8 (133 aa).

Belongs to the universal ribosomal protein uS8 family. Part of the 30S ribosomal subunit. Contacts proteins S5 and S12.

In terms of biological role, one of the primary rRNA binding proteins, it binds directly to 16S rRNA central domain where it helps coordinate assembly of the platform of the 30S subunit. This chain is Small ribosomal subunit protein uS8, found in Microcystis aeruginosa (strain NIES-843 / IAM M-2473).